Consider the following 393-residue polypeptide: Chalcone synthase 2 (393 aa).

The active site involves C166.

This sequence belongs to the thiolase-like superfamily. Chalcone/stilbene synthases family.

The enzyme catalyses (E)-4-coumaroyl-CoA + 3 malonyl-CoA + 3 H(+) = 2',4,4',6'-tetrahydroxychalcone + 3 CO2 + 4 CoA. It functions in the pathway secondary metabolite biosynthesis; flavonoid biosynthesis. Functionally, the primary product of this enzyme is 4,2',4',6'-tetrahydroxychalcone (also termed naringenin-chalcone or chalcone) which can under specific conditions spontaneously isomerize into naringenin. In Ruta graveolens (Common rue), this protein is Chalcone synthase 2 (CHS2).